Here is a 288-residue protein sequence, read N- to C-terminus: Fructose-bisphosphate aldolase (288 aa).

Position 49 (S49) interacts with D-glyceraldehyde 3-phosphate. The active-site Proton donor is the D84. Residues H85, D105, E135, and H177 each coordinate Zn(2+). G178 contributes to the dihydroxyacetone phosphate binding site. H206 contacts Zn(2+). Residues 207-209 (GGS) and 228-231 (NINT) each bind dihydroxyacetone phosphate.

The protein belongs to the class II fructose-bisphosphate aldolase family. As to quaternary structure, homodimer. The cofactor is Zn(2+).

It catalyses the reaction beta-D-fructose 1,6-bisphosphate = D-glyceraldehyde 3-phosphate + dihydroxyacetone phosphate. It functions in the pathway carbohydrate degradation; glycolysis; D-glyceraldehyde 3-phosphate and glycerone phosphate from D-glucose: step 4/4. Its function is as follows. Catalyzes the aldol condensation of dihydroxyacetone phosphate (DHAP or glycerone-phosphate) with glyceraldehyde 3-phosphate (G3P) to form fructose 1,6-bisphosphate (FBP) in gluconeogenesis and the reverse reaction in glycolysis. This is Fructose-bisphosphate aldolase (fba) from Mycoplasma pneumoniae (strain ATCC 29342 / M129 / Subtype 1) (Mycoplasmoides pneumoniae).